The sequence spans 719 residues: Leucine-rich repeat and fibronectin type-III domain-containing protein 5 (719 aa).

The N-terminal stretch at 1-17 (MEKILFYLFLIGIAVKA) is a signal peptide. The region spanning 18–51 (QICPKRCVCQILSPNLATLCAKKGLLFVPPNIDR) is the LRRNT domain. Topologically, residues 18–529 (QICPKRCVCQ…MQSQFLGGTM (512 aa)) are extracellular. LRR repeat units lie at residues 52–73 (RTVE…DFAN), 76–97 (SLVD…AFAD), 100–121 (NLRA…MFSG), 124–145 (NLHH…AFDD), 148–169 (ALEE…AVEK), 172–193 (SLHT…TFSH), and 196–217 (KMTR…PLFQ). N-linked (GlcNAc...) asparagine glycosylation is present at Asn73. Residues 240–286 (NPLHCNCELLWLRRLSREDDLETCASPPLLTGRYFWSIPEEEFLCEP) form the LRRCT domain. An Ig-like domain is found at 287-373 (PLITRHTHEM…GEATQIVDLH (87 aa)). Cys308 and Cys357 form a disulfide bridge. Asn330, Asn339, Asn382, Asn406, and Asn452 each carry an N-linked (GlcNAc...) asparagine glycan. The disordered stretch occupies residues 385 to 414 (NHIHEPDPGSSDISTSTKSGSNTSSSNGDT). Low complexity predominate over residues 393 to 414 (GSSDISTSTKSGSNTSSSNGDT). Positions 414 to 503 (TKLSQDKIVV…ITSLTATRVV (90 aa)) constitute a Fibronectin type-III domain. A helical membrane pass occupies residues 530-550 (IIIIGGIIVASVLVFIIILMI). At 551–719 (RYKVCNNNGQ…VQETQRLELI (169 aa)) the chain is on the cytoplasmic side. Residues 615–627 (ETCSSQDSSTTTS) are compositionally biased toward low complexity. The disordered stretch occupies residues 615–694 (ETCSSQDSST…SVTEGPTSKR (80 aa)). 2 stretches are compositionally biased toward polar residues: residues 628-641 (ALPP…SVSQ) and 649-677 (TKPS…TALQ).

It belongs to the LRFN family. As to quaternary structure, can form heteromeric complexes with LRFN1, LRFN2, LRFN3 and LFRN4. Able to form homomeric complexes across cell junctions, between adjacent cells. Does not interact with DLG1, DLG2, DLG3 and DLG4.

The protein resides in the membrane. Its function is as follows. Cell adhesion molecule that mediates homophilic cell-cell adhesion in a Ca(2+)-independent manner. Promotes neurite outgrowth in hippocampal neurons. The polypeptide is Leucine-rich repeat and fibronectin type-III domain-containing protein 5 (LRFN5) (Homo sapiens (Human)).